A 1388-amino-acid polypeptide reads, in one-letter code: Rho-associated protein kinase 2 (1388 aa).

The segment at 1 to 24 is disordered; it reads MSRPPPTGKMPGAPEAAAGDGAGA. A Protein kinase domain is found at 92-354; the sequence is YDVVKVIGRG…VEEIKSASFF (263 aa). ATP is bound by residues 98–106 and K121; that span reads IGRGAFGEV. Residue D214 is the Proton acceptor of the active site. The 69-residue stretch at 357–425 folds into the AGC-kinase C-terminal domain; sequence DQWNWDNIRE…FRENLLLSDS (69 aa). The interval 363-784 is interaction with PPP1R12A; that stretch reads NIRETAAPVV…LNELLKQKDV (422 aa). An interaction with NPM1 region spans residues 373–420; that stretch reads PELSSDIDSSNFDDIEDDKGDVETFPIPKAFVGNQLPFIGFTYFRENL. T414 bears the Phosphothreonine; by ROCK2 mark. Coiled coils occupy residues 439–1024 and 1052–1131; these read SEES…EKQL and SDTD…IGMD. The region spanning 497–573 is the REM-1 domain; that stretch reads TLRQLEREKA…LDEANALLRT (77 aa). The segment covering 513–530 has biased composition (basic and acidic residues); sequence AEYQRKADHEADKKRNLE. The segment at 513 to 532 is disordered; sequence AEYQRKADHEADKKRNLEND. Phosphotyrosine; by SRC is present on Y722. The 69-residue stretch at 979–1047 folds into the RhoBD domain; it reads TSDVANLANE…LAEIMNRKEP (69 aa). Residues 979–1047 form an RHOA binding region; it reads TSDVANLANE…LAEIMNRKEP (69 aa). Phosphoserine is present on S1137. One can recognise a PH domain in the interval 1150 to 1349; that stretch reads ESRLEGWLSL…WVSRLVKKIP (200 aa). T1212 is subject to Phosphothreonine. Residues 1260-1315 form a Phorbol-ester/DAG-type zinc finger; sequence GHEFIPTLYHFPTNCEACMKPLWHMFKPPPALECSRCHIKCHKDHMDKKEEIIAPC. The interval 1345–1388 is disordered; it reads VKKIPKKPPAPDPFARSSPRTSMKIQQNQSIRRPSRQLAPNKPS. Residues S1362 and S1374 each carry the phosphoserine modification. A compositionally biased stretch (polar residues) spans 1362–1376; the sequence is SPRTSMKIQQNQSIR.

The protein belongs to the protein kinase superfamily. AGC Ser/Thr protein kinase family. Homodimer. Interacts with IRS1. Interacts with RAF1. Interacts with RHOA (activated by GTP), RHOB, RHOC. Interacts with PPP1R12A. Interacts with EP300. Interacts with CHORDC1. Interacts with BRCA2. Interacts with NPM1; this interaction enhances its activity. Interacts with SORL1. Interacts with PJVK. It depends on Mg(2+) as a cofactor. In terms of processing, autophosphorylated. Phosphorylation at Tyr-722 reduces its binding to RHOA and is crucial for focal adhesion dynamics. Dephosphorylation by PTPN11 stimulates its RHOA binding activity. Post-translationally, cleaved by granzyme B during apoptosis. This leads to constitutive activation of the kinase and membrane blebbing. As to expression, highly expressed in brain, lung, liver, skeletal muscle, kidney and testis.

It localises to the cytoplasm. The protein localises to the cell membrane. Its subcellular location is the nucleus. It is found in the cytoskeleton. The protein resides in the microtubule organizing center. It localises to the centrosome. The enzyme catalyses L-seryl-[protein] + ATP = O-phospho-L-seryl-[protein] + ADP + H(+). It carries out the reaction L-threonyl-[protein] + ATP = O-phospho-L-threonyl-[protein] + ADP + H(+). Activated by RHOA binding. Inhibited by Y-27632. Functionally, protein kinase which is a key regulator of actin cytoskeleton and cell polarity. Involved in regulation of smooth muscle contraction, actin cytoskeleton organization, stress fiber and focal adhesion formation, neurite retraction, cell adhesion and motility via phosphorylation of ADD1, BRCA2, CNN1, EZR, DPYSL2, EP300, MSN, MYL9/MLC2, NPM1, RDX, PPP1R12A and VIM. Phosphorylates SORL1 and IRF4. Acts as a negative regulator of VEGF-induced angiogenic endothelial cell activation. Positively regulates the activation of p42/MAPK1-p44/MAPK3 and of p90RSK/RPS6KA1 during myogenic differentiation. Plays an important role in the timely initiation of centrosome duplication. Inhibits keratinocyte terminal differentiation. May regulate closure of the eyelids and ventral body wall through organization of actomyosin bundles. Plays a critical role in the regulation of spine and synaptic properties in the hippocampus. Plays a role in placental homeostasis during the perinatal period. Plays an important role in generating the circadian rhythm of the aortic myofilament Ca(2+) sensitivity and vascular contractility by modulating the myosin light chain phosphorylation. In Rattus norvegicus (Rat), this protein is Rho-associated protein kinase 2 (Rock2).